The sequence spans 453 residues: Chromosomal replication initiator protein DnaA (453 aa).

The tract at residues 1 to 74 (MKEKQFWNRI…GFEIYDAEIT (74 aa)) is domain I, interacts with DnaA modulators. Positions 74-113 (TPHYIFTKPQDTTSSQVEEATNLTLYDYSPKLVSIPYSDT) are domain II. The domain III, AAA+ region stretch occupies residues 114–331 (GLKEKYTFDN…GAINDITLIA (218 aa)). The ATP site is built by Gly-158, Gly-160, Lys-161, and Thr-162. The segment at 332–453 (RVKKIKDITI…EIESIKKKIK (122 aa)) is domain IV, binds dsDNA.

This sequence belongs to the DnaA family. In terms of assembly, oligomerizes as a right-handed, spiral filament on DNA at oriC. Interacts (via domains I and III) with CcrZ.

Its subcellular location is the cytoplasm. With respect to regulation, ccrZ stimulates DnaA, possibly by phosphorylation of an intermediate molecule, to initiate DNA replication. Plays an essential role in the initiation and regulation of chromosomal replication. ATP-DnaA binds to the origin of replication (oriC) to initiate formation of the DNA replication initiation complex once per cell cycle. Binds the DnaA box (a 9 base pair repeat at the origin) and separates the double-stranded (ds)DNA. Forms a right-handed helical filament on oriC DNA; dsDNA binds to the exterior of the filament while single-stranded (ss)DNA is stabiized in the filament's interior. The ATP-DnaA-oriC complex binds and stabilizes one strand of the AT-rich DNA unwinding element (DUE), permitting loading of DNA polymerase. After initiation quickly degrades to an ADP-DnaA complex that is not apt for DNA replication. Binds acidic phospholipids. In terms of biological role, mutations in this gene suppress a deletion of cell cycle regulator ccrZ. This chain is Chromosomal replication initiator protein DnaA, found in Streptococcus pneumoniae serotype 2 (strain D39 / NCTC 7466).